A 153-amino-acid polypeptide reads, in one-letter code: Holo-[acyl-carrier-protein] synthase (153 aa).

The Mg(2+) site is built by D24 and E78.

Belongs to the P-Pant transferase superfamily. AcpS family. Mg(2+) is required as a cofactor.

The protein localises to the cytoplasm. It catalyses the reaction apo-[ACP] + CoA = holo-[ACP] + adenosine 3',5'-bisphosphate + H(+). Functionally, transfers the 4'-phosphopantetheine moiety from coenzyme A to a Ser of acyl-carrier-protein. The chain is Holo-[acyl-carrier-protein] synthase from Bordetella pertussis (strain Tohama I / ATCC BAA-589 / NCTC 13251).